A 414-amino-acid chain; its full sequence is Tyrosine--tRNA ligase (414 aa).

Tyr-38 lines the L-tyrosine pocket. The short motif at 43–52 (CTARSLHIGS) is the 'HIGH' region element. Residues Tyr-172 and Gln-176 each coordinate L-tyrosine. The 'KMSKS' region motif lies at 232 to 236 (KMGKT). Lys-235 is a binding site for ATP. The region spanning 345–412 (ISVAKLLQLA…GKKRRIKVVV (68 aa)) is the S4 RNA-binding domain.

It belongs to the class-I aminoacyl-tRNA synthetase family. TyrS type 1 subfamily. As to quaternary structure, homodimer.

Its subcellular location is the cytoplasm. The enzyme catalyses tRNA(Tyr) + L-tyrosine + ATP = L-tyrosyl-tRNA(Tyr) + AMP + diphosphate + H(+). In terms of biological role, catalyzes the attachment of tyrosine to tRNA(Tyr) in a two-step reaction: tyrosine is first activated by ATP to form Tyr-AMP and then transferred to the acceptor end of tRNA(Tyr). The sequence is that of Tyrosine--tRNA ligase from Anaplasma marginale (strain St. Maries).